Here is a 1437-residue protein sequence, read N- to C-terminus: DNA polymerase III PolC-type (1437 aa).

Positions 420–576 constitute an Exonuclease domain; sequence YVIFDVETTG…YDSETTGHLC (157 aa).

Belongs to the DNA polymerase type-C family. PolC subfamily.

Its subcellular location is the cytoplasm. The catalysed reaction is DNA(n) + a 2'-deoxyribonucleoside 5'-triphosphate = DNA(n+1) + diphosphate. Its function is as follows. Required for replicative DNA synthesis. This DNA polymerase also exhibits 3' to 5' exonuclease activity. In Pediococcus pentosaceus (strain ATCC 25745 / CCUG 21536 / LMG 10740 / 183-1w), this protein is DNA polymerase III PolC-type.